We begin with the raw amino-acid sequence, 197 residues long: Potassium-transporting ATPase KdpC subunit (197 aa).

The chain crosses the membrane as a helical span at residues 9–29; the sequence is LVVTLLLAALLCGAYPVLVTG.

This sequence belongs to the KdpC family. In terms of assembly, the system is composed of three essential subunits: KdpA, KdpB and KdpC.

The protein resides in the cell inner membrane. Part of the high-affinity ATP-driven potassium transport (or Kdp) system, which catalyzes the hydrolysis of ATP coupled with the electrogenic transport of potassium into the cytoplasm. This subunit acts as a catalytic chaperone that increases the ATP-binding affinity of the ATP-hydrolyzing subunit KdpB by the formation of a transient KdpB/KdpC/ATP ternary complex. This Nitratidesulfovibrio vulgaris (strain DSM 19637 / Miyazaki F) (Desulfovibrio vulgaris) protein is Potassium-transporting ATPase KdpC subunit.